The primary structure comprises 255 residues: Hemin import ATP-binding protein HmuV (255 aa).

The ABC transporter domain maps to 2–238 (LRVENLHVRR…EPLKAVFGLE (237 aa)). 34–41 (GPNGAGKS) serves as a coordination point for ATP.

It belongs to the ABC transporter superfamily. Heme (hemin) importer (TC 3.A.1.14.5) family. As to quaternary structure, the complex is composed of two ATP-binding proteins (HmuV), two transmembrane proteins (HmuU) and a solute-binding protein (HmuT).

It localises to the cell inner membrane. Part of the ABC transporter complex HmuTUV involved in hemin import. Responsible for energy coupling to the transport system. The sequence is that of Hemin import ATP-binding protein HmuV from Pseudomonas fluorescens (strain ATCC BAA-477 / NRRL B-23932 / Pf-5).